The chain runs to 1480 residues: ABC transporter G family member 49 (1480 aa).

Residues 1 to 18 (MHTTTQATPQKSMVMTTT) are compositionally biased toward polar residues. Disordered stretches follow at residues 1–42 (MHTT…AGSS), 60–81 (VSGE…EDDE), and 104–124 (SSTR…GGAA). Gly residues-rich tracts occupy residues 63–73 (ELGGGGGGGGG) and 107–123 (RGGG…GGGA). Residues 212-485 (LAAKLGFSHH…FESCGFKCPE (274 aa)) enclose the ABC transporter 1 domain. Residue 245–252 (GPPGCGKT) coordinates ATP. Positions 563-775 (HLLKACFDRE…AEIGLTGNEF (213 aa)) constitute an ABC transmembrane type-2 1 domain. The next 6 helical transmembrane spans lie at 581-601 (FLHI…GTVF), 619-639 (SLFY…VMSI), 656-676 (GWAY…VAAL), 699-719 (LLVL…VGSY), 725-745 (VGPI…GFLI), and 811-831 (VAAL…GLTI). The region spanning 877–1129 (ISFQDVNYYV…KVIQYFQSIP (253 aa)) is the ABC transporter 2 domain. Position 922 to 929 (922 to 929 (GVTGAGKT)) interacts with ATP. One can recognise an ABC transmembrane type-2 2 domain in the interval 1202–1418 (EQFKACLWKQ…TLNLLFTTQF (217 aa)). 7 consecutive transmembrane segments (helical) span residues 1226-1246 (IVFM…QGNI), 1254-1274 (GLFT…INNS), 1311-1331 (IPYV…TIGY), 1340-1360 (WFFY…MLIV), 1368-1388 (VASI…GFVM), 1396-1416 (WWIW…LFTT), and 1449-1469 (LLPL…ILYG).

This sequence belongs to the ABC transporter superfamily. ABCG family. PDR (TC 3.A.1.205) subfamily.

The protein resides in the membrane. May be a general defense protein. This chain is ABC transporter G family member 49, found in Oryza sativa subsp. japonica (Rice).